Here is a 526-residue protein sequence, read N- to C-terminus: Na(+)/H(+) antiporter NhaB (526 aa).

13 helical membrane passes run Phe-14–Pro-34, Leu-35–Phe-55, Met-99–Phe-119, Leu-122–Phe-142, Phe-146–Ile-166, Leu-206–Pro-226, Phe-239–Leu-259, Ala-307–Ile-327, Gly-328–Gly-348, Phe-357–Phe-377, Tyr-397–Ile-417, Ala-451–Ile-471, and Val-479–Phe-499.

This sequence belongs to the NhaB Na(+)/H(+) (TC 2.A.34) antiporter family.

It is found in the cell inner membrane. The enzyme catalyses 2 Na(+)(in) + 3 H(+)(out) = 2 Na(+)(out) + 3 H(+)(in). Functionally, na(+)/H(+) antiporter that extrudes sodium in exchange for external protons. The chain is Na(+)/H(+) antiporter NhaB from Pectobacterium atrosepticum (strain SCRI 1043 / ATCC BAA-672) (Erwinia carotovora subsp. atroseptica).